Consider the following 166-residue polypeptide: Co-chaperone protein HscB homolog (166 aa).

Residues 3–75 (QYFTLFRIEP…IDRAAYLLKT (73 aa)) enclose the J domain.

The protein belongs to the HscB family. In terms of assembly, interacts with HscA and stimulates its ATPase activity.

Co-chaperone involved in the maturation of iron-sulfur cluster-containing proteins. Seems to help targeting proteins to be folded toward HscA. The chain is Co-chaperone protein HscB homolog from Neisseria meningitidis serogroup A / serotype 4A (strain DSM 15465 / Z2491).